Reading from the N-terminus, the 89-residue chain is Small ribosomal subunit protein uS15 (89 aa).

It belongs to the universal ribosomal protein uS15 family. In terms of assembly, part of the 30S ribosomal subunit. Forms a bridge to the 50S subunit in the 70S ribosome, contacting the 23S rRNA.

Functionally, one of the primary rRNA binding proteins, it binds directly to 16S rRNA where it helps nucleate assembly of the platform of the 30S subunit by binding and bridging several RNA helices of the 16S rRNA. Forms an intersubunit bridge (bridge B4) with the 23S rRNA of the 50S subunit in the ribosome. This Lactobacillus delbrueckii subsp. bulgaricus (strain ATCC 11842 / DSM 20081 / BCRC 10696 / JCM 1002 / NBRC 13953 / NCIMB 11778 / NCTC 12712 / WDCM 00102 / Lb 14) protein is Small ribosomal subunit protein uS15.